The following is a 325-amino-acid chain: Helicase VP6-A (325 aa).

Disordered regions lie at residues 1-122 and 185-230; these read MLLA…GATG and DLRR…EPAR. Basic and acidic residues-rich tracts occupy residues 8-18, 32-54, 61-79, and 92-105; these read VIKRSSEELKQ, EGGKEDKTEPKEESKAEGSKDGE, GQKEEGGKETKDADVDRRI, and LGERANENADRGDG. Residue Lys106 participates in ATP binding. Residues 106 to 122 are compositionally biased toward gly residues; it reads KVGGGGGDADAGVGATG. Composition is skewed to basic and acidic residues over residues 185-203 and 211-229; these read DLRRKEKNGTHAKAVERGG and HGDAQREGVEEEKTSEEPA.

This sequence belongs to the orbivirus VP6 family. Homohexamer.

It localises to the virion. It carries out the reaction ATP + H2O = ADP + phosphate + H(+). Functionally, ATP dependent RNA helicase essential for RNA packaging and viral transcription. Possesses ss- and dsRNA-binding capacity. This Bluetongue virus 17 (isolate USA) (BTV 17) protein is Helicase VP6-A (Segment-9).